A 258-amino-acid chain; its full sequence is Adenylate kinase (258 aa).

52 to 57 (GAGKGT) is an ATP binding site. The segment at 72 to 101 (ATGDMLRSQVAKKTELGKEAKKIMDQGGLV) is NMP. Residues Thr73, Arg78, 99 to 101 (GLV), 128 to 131 (GFPR), and Gln135 each bind AMP. The tract at residues 169-206 (GRLVHPASGRSYHKVFNPPKQEMKDDITGEPLIQRSDD) is LID. Residues Arg170 and 179–180 (SY) contribute to the ATP site. Positions 203 and 214 each coordinate AMP. Residue Gln242 coordinates ATP.

This sequence belongs to the adenylate kinase family. AK2 subfamily. In terms of assembly, monomer.

It localises to the cytoplasm. The protein resides in the cytosol. The protein localises to the mitochondrion intermembrane space. The enzyme catalyses AMP + ATP = 2 ADP. In terms of biological role, catalyzes the reversible transfer of the terminal phosphate group between ATP and AMP. Plays an important role in cellular energy homeostasis and in adenine nucleotide metabolism. Adenylate kinase activity is critical for regulation of the phosphate utilization and the AMP de novo biosynthesis pathways. This chain is Adenylate kinase (adk1), found in Aspergillus oryzae (strain ATCC 42149 / RIB 40) (Yellow koji mold).